The chain runs to 141 residues: Transcriptional regulator MraZ (141 aa).

SpoVT-AbrB domains lie at 5 to 47 and 75 to 118; these read EYNH…PNEE and AADC…SKER.

Belongs to the MraZ family. As to quaternary structure, forms oligomers.

The protein localises to the cytoplasm. The protein resides in the nucleoid. The polypeptide is Transcriptional regulator MraZ (Lachnoclostridium phytofermentans (strain ATCC 700394 / DSM 18823 / ISDg) (Clostridium phytofermentans)).